We begin with the raw amino-acid sequence, 153 residues long: uncharacterized protein (153 aa).

The signal sequence occupies residues 1 to 22; it reads MKLLKKGTTVLFVMIMAVMLVA. Cys-23 carries N-palmitoyl cysteine lipidation. A lipid anchor (S-diacylglycerol cysteine) is attached at Cys-23. The segment at 121–153 is disordered; sequence LPGMASTGDVSKGISMKESEKMLKSQGFKEVEK. The span at 135–153 shows a compositional bias: basic and acidic residues; the sequence is SMKESEKMLKSQGFKEVEK.

This sequence to E.coli YehR.

The protein localises to the cell membrane. This is an uncharacterized protein from Listeria innocua serovar 6a (strain ATCC BAA-680 / CLIP 11262).